The sequence spans 220 residues: Ribonuclease HII (220 aa).

An RNase H type-2 domain is found at 32–220 (KHIAGIDEAG…FAPIKGRFDC (189 aa)). 3 residues coordinate a divalent metal cation: aspartate 38, glutamate 39, and aspartate 130.

This sequence belongs to the RNase HII family. Mn(2+) serves as cofactor. Mg(2+) is required as a cofactor.

It is found in the cytoplasm. The enzyme catalyses Endonucleolytic cleavage to 5'-phosphomonoester.. Functionally, endonuclease that specifically degrades the RNA of RNA-DNA hybrids. The protein is Ribonuclease HII of Brucella canis (strain ATCC 23365 / NCTC 10854 / RM-666).